The following is a 157-amino-acid chain: Transcription elongation factor GreA (157 aa).

Belongs to the GreA/GreB family.

In terms of biological role, necessary for efficient RNA polymerase transcription elongation past template-encoded arresting sites. The arresting sites in DNA have the property of trapping a certain fraction of elongating RNA polymerases that pass through, resulting in locked ternary complexes. Cleavage of the nascent transcript by cleavage factors such as GreA or GreB allows the resumption of elongation from the new 3'terminus. GreA releases sequences of 2 to 3 nucleotides. In Caulobacter vibrioides (strain ATCC 19089 / CIP 103742 / CB 15) (Caulobacter crescentus), this protein is Transcription elongation factor GreA.